The chain runs to 712 residues: MSQEKQVFSIDLAGRQLTVETGQLAKQANGAVLVRYGDTAVLSTATASKEAKNVDFFPLTVNYEERLYAVGKIPGGFIKREGRPSEKAILASRLIDRPIRPLFADGFRNEVQVVSIVMSVDQDCSSEMAAMLGSSLALSISDIPFEGPIAGATVGRINGEFVINPTVEQQEQSDIHLVVAGTKDAINMVEAGADQVPEETMLEAIMFGHDEIKRLIAFQEEIVQAVGKEKSEVKLYEVDADLNQSVREMAEKDMHSAIQVHEKHAREDAINEVKKRVIEHYEAQEADADTLGQVNEILYKIVKEEVRRLITVEKIRPDGRKGDEIRPLASEVGILSRTHGSGLFTRGQTQALSICTLGALGDVQILDGLGVEESKRFMHHYNFPSFSVGETRPMRGPGRREIGHGALGERALEPVIPSEKDFPYTVRLVSEVLESNGSTSQASICGSTLAMMDAGVPLKAPVAGIAMGLVKSGEHYTILTDIQGMEDHLGDMDFKVAGTAHGVTALQMDIKIDGLSREILEEALQQAKVGRMHILDHMLSVIAEPRTELSAYAPKIITMTINPDKIRDVIGPSGKQINKIIEETGVKIDIEQDGTVFISSINQEMNDKAKKIIEDIVREVQVGEIYEGKVKRVEKFGAFVELFSGKDGLVHISELALERVGKVEDVVKIGDVITVKVIEIDKQGRVNLSRKVLLKEEQEKEAAKEENKQEQQ.

Positions 487 and 493 each coordinate Mg(2+). The region spanning 554 to 613 is the KH domain; that stretch reads PKIITMTINPDKIRDVIGPSGKQINKIIEETGVKIDIEQDGTVFISSINQEMNDKAKKII. The region spanning 623–691 is the S1 motif domain; the sequence is GEIYEGKVKR…KQGRVNLSRK (69 aa).

The protein belongs to the polyribonucleotide nucleotidyltransferase family. It depends on Mg(2+) as a cofactor.

It is found in the cytoplasm. The enzyme catalyses RNA(n+1) + phosphate = RNA(n) + a ribonucleoside 5'-diphosphate. Its function is as follows. Involved in mRNA degradation. Catalyzes the phosphorolysis of single-stranded polyribonucleotides processively in the 3'- to 5'-direction. The polypeptide is Polyribonucleotide nucleotidyltransferase (Bacillus cereus (strain ATCC 10987 / NRS 248)).